The chain runs to 178 residues: Gamma-crystallin S (178 aa).

Ser2 is subject to N-acetylserine. The segment at 2–5 is N-terminal arm; sequence SKTG. 2 consecutive Beta/gamma crystallin 'Greek key' domains span residues 6–44 and 45–87; these read AKIS…RVEG and GTWA…RAVH. Residues 88–93 are connecting peptide; the sequence is LSSGGQ. Beta/gamma crystallin 'Greek key' domains are found at residues 94–134 and 135–177; these read YKIQ…KVLE and GTWI…RRIV.

It belongs to the beta/gamma-crystallin family. Monomer.

Its function is as follows. Crystallins are the dominant structural components of the vertebrate eye lens. This Rattus norvegicus (Rat) protein is Gamma-crystallin S (Crygs).